A 516-amino-acid chain; its full sequence is ADP-ribosylation factor GTPase-activating protein 3 (516 aa).

Residues 10–126 (LTIFKRLRSV…IKSLASQATR (117 aa)) enclose the Arf-GAP domain. The C4-type zinc-finger motif lies at 25–48 (CFDCGAKNPSWASITYGVFLCIDC). The disordered stretch occupies residues 170-199 (AEPSSLTSRPVETTLENNEGGQEQGPSVEG). Residues 173 to 194 (SSLTSRPVETTLENNEGGQEQG) are compositionally biased toward polar residues. Ser-231 carries the post-translational modification Phosphoserine. The stretch at 243–264 (NEIEKQAQAADKMKEQEDLAKA) forms a coiled coil. Phosphoserine is present on residues Ser-270, Ser-274, Ser-331, and Ser-370. The tract at residues 392-414 (KTTGYSDRPTARRKPDYEPVENT) is disordered. Ser-428, Ser-451, Ser-453, Ser-455, Ser-457, and Ser-458 each carry phosphoserine.

The protein localises to the cytoplasm. It is found in the golgi apparatus membrane. GAP activity stimulated by phosphatidylinositol 4,5-bisphosphate (PIP2). Functionally, GTPase-activating protein (GAP) for ADP ribosylation factor 1 (ARF1). Hydrolysis of ARF1-bound GTP may lead to dissociation of coatomer from Golgi-derived membranes to allow fusion with target membranes. The chain is ADP-ribosylation factor GTPase-activating protein 3 from Macaca fascicularis (Crab-eating macaque).